An 840-amino-acid chain; its full sequence is Putative pentatricopeptide repeat-containing protein At1g31840 (840 aa).

PPR repeat units follow at residues 98 to 128, 145 to 179, 180 to 214, 216 to 250, 251 to 284, 285 to 319, 320 to 354, 355 to 389, 390 to 424, 425 to 459, 460 to 494, 495 to 529, 530 to 564, 565 to 599, 600 to 634, 635 to 669, 670 to 704, 705 to 739, 740 to 774, and 775 to 809; these read KDPS…MITN, DADV…GVVI, PQDS…GIEP, GVSA…GFRV, GIVS…GPAP, NVVT…GIEP, DLIA…GVKL, DVVV…GISP, NVVT…GMEP, SIVT…GYPP, DVVI…SIRL, NVVV…GIKP, DVAT…GLEP, DALA…KISA, DIAV…KMEP, DIVT…PFGP, NTVT…GSKP, NAVT…GISP, SIVS…KLLP, and DVVA…GVKP.

It belongs to the PPR family. P subfamily.

The polypeptide is Putative pentatricopeptide repeat-containing protein At1g31840 (Arabidopsis thaliana (Mouse-ear cress)).